Consider the following 239-residue polypeptide: Uridylate kinase (239 aa).

12–15 (KLSG) provides a ligand contact to ATP. The involved in allosteric activation by GTP stretch occupies residues 20–25 (GDQGAG). G54 lines the UMP pocket. Residues G55 and R59 each contribute to the ATP site. UMP contacts are provided by residues D74 and 135–142 (TGNPFFTT). Residues T162, Y168, and D171 each contribute to the ATP site.

This sequence belongs to the UMP kinase family. In terms of assembly, homohexamer.

The protein localises to the cytoplasm. The catalysed reaction is UMP + ATP = UDP + ADP. Its pathway is pyrimidine metabolism; CTP biosynthesis via de novo pathway; UDP from UMP (UMPK route): step 1/1. Allosterically activated by GTP. Inhibited by UTP. In terms of biological role, catalyzes the reversible phosphorylation of UMP to UDP. The sequence is that of Uridylate kinase from Methylococcus capsulatus (strain ATCC 33009 / NCIMB 11132 / Bath).